The chain runs to 169 residues: Flagellar biosynthetic protein FliU (169 aa).

This sequence belongs to the FliB family.

Its function is as follows. Required for the secretion of flagellin and expression of motility. The chain is Flagellar biosynthetic protein FliU (fliU) from Salmonella muenchen.